Reading from the N-terminus, the 267-residue chain is Dihydropteroate synthase (267 aa).

The Pterin-binding domain occupies Met1 to Gln251. Mg(2+) is bound at residue Asn11. (7,8-dihydropterin-6-yl)methyl diphosphate is bound by residues Thr51, Asp84, Asn103, Asp167, Lys203, and Arg239–His241.

It belongs to the DHPS family. Requires Mg(2+) as cofactor.

The catalysed reaction is (7,8-dihydropterin-6-yl)methyl diphosphate + 4-aminobenzoate = 7,8-dihydropteroate + diphosphate. Its pathway is cofactor biosynthesis; tetrahydrofolate biosynthesis; 7,8-dihydrofolate from 2-amino-4-hydroxy-6-hydroxymethyl-7,8-dihydropteridine diphosphate and 4-aminobenzoate: step 1/2. Catalyzes the condensation of para-aminobenzoate (pABA) with 6-hydroxymethyl-7,8-dihydropterin diphosphate (DHPt-PP) to form 7,8-dihydropteroate (H2Pte), the immediate precursor of folate derivatives. The protein is Dihydropteroate synthase (folP) of Staphylococcus haemolyticus.